We begin with the raw amino-acid sequence, 62 residues long: Ranacyclin-T (62 aa).

Residues 1-22 (MFTMKKTLLVLFFLGVVSLSLC) form the signal peptide. Residues 23–43 (VEERDADEEDGGEVMEEEVKR) constitute a propeptide that is removed on maturation. A disulfide bridge connects residues C49 and C59. K60 is subject to Lysine amide.

The protein belongs to the frog skin active peptide (FSAP) family. Brevinin subfamily. Expressed by the skin granular glands.

The protein resides in the secreted. In terms of biological role, has antibacterial activity against Gram-positive bacteria B.megaterium Bm11, S.lentus and M.luteus, and Gram-negative bacteria E.coli D22, Y.pseudotuberculosis YP III and P.syringae pv tabaci, and antifungal activity against C.albicans ATCC 10231, C.tropicalis, C.guiller-mondii and P.nicotianae spores. Has weak hemolytic activity. The mature peptide inserts into the hydrophobic core of the bacterial cell membrane and increases permeability without disrupting membrane integrity. Probably binds to the outer membrane surface before aggregating to form transmembrane pores. The polypeptide is Ranacyclin-T (RNCT) (Rana temporaria (European common frog)).